The sequence spans 409 residues: Tryptophan synthase beta chain (409 aa).

Position 95 is an N6-(pyridoxal phosphate)lysine (Lys95).

This sequence belongs to the TrpB family. As to quaternary structure, tetramer of two alpha and two beta chains. Pyridoxal 5'-phosphate is required as a cofactor.

The enzyme catalyses (1S,2R)-1-C-(indol-3-yl)glycerol 3-phosphate + L-serine = D-glyceraldehyde 3-phosphate + L-tryptophan + H2O. It participates in amino-acid biosynthesis; L-tryptophan biosynthesis; L-tryptophan from chorismate: step 5/5. In terms of biological role, the beta subunit is responsible for the synthesis of L-tryptophan from indole and L-serine. The chain is Tryptophan synthase beta chain from Pseudomonas syringae pv. syringae (strain B728a).